The following is a 123-amino-acid chain: Large ribosomal subunit protein bL19 (123 aa).

The protein belongs to the bacterial ribosomal protein bL19 family.

Its function is as follows. This protein is located at the 30S-50S ribosomal subunit interface and may play a role in the structure and function of the aminoacyl-tRNA binding site. The sequence is that of Large ribosomal subunit protein bL19 from Thermomicrobium roseum (strain ATCC 27502 / DSM 5159 / P-2).